The chain runs to 140 residues: Large ribosomal subunit protein uL14x/uL14z/uL14y (140 aa).

Belongs to the universal ribosomal protein uL14 family.

The chain is Large ribosomal subunit protein uL14x/uL14z/uL14y (RPL23A) from Arabidopsis thaliana (Mouse-ear cress).